Here is a 79-residue protein sequence, read N- to C-terminus: Small ribosomal subunit protein bS18c (79 aa).

It belongs to the bacterial ribosomal protein bS18 family. Part of the 30S ribosomal subunit.

The protein localises to the plastid. It localises to the chloroplast. The polypeptide is Small ribosomal subunit protein bS18c (Chaetosphaeridium globosum (Charophycean green alga)).